We begin with the raw amino-acid sequence, 933 residues long: Myocardin (933 aa).

Residues 12 to 27 carry the MEF2C-binding motif; sequence IRSKFRSVLQLRLQQR. RPEL repeat units lie at residues 18–43, 62–87, and 106–131; these read SVLQ…PPLR, DTLK…QASS, and DDLN…PVDC. Residues 153–205 are HDAC5-binding; that stretch reads FEEDSSSDGLSPDQTRSEDLPGSAGSPLDTKAAETPLAGPRGTVQDLTLGSEN. Disordered regions lie at residues 154–282 and 324–365; these read EEDS…PPPM and NEQM…GPLP. The span at 210-220 shows a compositional bias: polar residues; it reads SAPQSGNQSDL. Basic residues predominate over residues 248–265; it reads NRHKKPKDPKPKVKKLKY. Residues 330-346 are compositionally biased toward low complexity; it reads NPNSSSAPLSSTPLSPA. Residues 347-357 are compositionally biased toward polar residues; that stretch reads KNSFSGQTGVS. The SAP domain occupies 368 to 402; the sequence is LDDLKVSELRQQLRIRGLPVSGTKTALMDRLRPFQ. Serine 445, serine 449, serine 453, and serine 457 each carry phosphoserine; by GSK3-beta. The stretch at 515–550 forms a coiled coil; sequence LVEKQKVINELTWKLQQEQRQVEELRMQLQKQKRGT. Positions 568–613 are disordered; it reads DAGSSCPFAPLPRAVKRQSNSSEEQPAAGDAARLRPLGNTHCAESS. 4 positions are modified to phosphoserine; by GSK3-beta: serine 621, serine 625, serine 629, and serine 633. Disordered regions lie at residues 630-672 and 760-794; these read PQHS…VSSP and PKIP…FDHY. The tract at residues 712-933 is required for interaction with and ubiquitination by STUB1; that stretch reads ITQPPSYEDA…SPMDLHLQQW (222 aa). Phosphoserine; by MAPK1 and MAPK3 occurs at positions 810, 857, and 864. The residue at position 891 (threonine 891) is a Phosphothreonine; by MAPK1 and MAPK3.

In terms of assembly, homodimer. Interacts with MLLT7/FOXO4. Interacts with SRF, its association does not depend on specific DNA sequences for ternary complex formation. Interacts (via C-terminal) with EP300 (via the CREB-binding domain). Interacts with HDAC4 and HDAC5. Interacts with MEF2C. Interacts (via C-terminus) with STUB1/CHIP. Interacts with PURB. Post-translationally, ubiquitinated; by STUB1/CHIP at the C-terminus, leading to its degradation by the proteasome. Phosphorylation by GSK3B is required for STUB1/CHIP-mediated ubiquitination. In terms of processing, phosphorylation negatively regulates the intrinsic myocardin transcriptional activity. Phosphorylated; by GSK3B. In terms of tissue distribution, expressed in the heart and in smooth muscle cells-containing tissues (aorta, pulmonary vein, lung), but is not detectable in skeletal muscle, liver, kidney and spleen.

Its subcellular location is the nucleus. Functionally, smooth muscle cells (SM) and cardiac muscle cells-specific transcriptional factor which uses the canonical single or multiple CArG boxes DNA sequence. Acts as a cofactor of serum response factor (SRF) with the potential to modulate SRF-target genes. Plays a crucial role in cardiogenesis, urinary bladder development, and differentiation of the smooth muscle cell lineage (myogenesis). Positively regulates the transcription of genes involved in vascular smooth muscle contraction. The chain is Myocardin (MYOCD) from Sus scrofa (Pig).